A 408-amino-acid polypeptide reads, in one-letter code: Peptidase T (408 aa).

H78 lines the Zn(2+) pocket. The active site involves D80. D141 contributes to the Zn(2+) binding site. E175 serves as the catalytic Proton acceptor. Positions 176, 198, and 380 each coordinate Zn(2+).

Belongs to the peptidase M20B family. Zn(2+) is required as a cofactor.

It is found in the cytoplasm. The catalysed reaction is Release of the N-terminal residue from a tripeptide.. Its function is as follows. Cleaves the N-terminal amino acid of tripeptides. This Clostridium botulinum (strain Loch Maree / Type A3) protein is Peptidase T.